Reading from the N-terminus, the 272-residue chain is 2-succinyl-6-hydroxy-2,4-cyclohexadiene-1-carboxylate synthase (272 aa).

Belongs to the AB hydrolase superfamily. MenH family. In terms of assembly, monomer.

The catalysed reaction is 5-enolpyruvoyl-6-hydroxy-2-succinyl-cyclohex-3-ene-1-carboxylate = (1R,6R)-6-hydroxy-2-succinyl-cyclohexa-2,4-diene-1-carboxylate + pyruvate. The protein operates within quinol/quinone metabolism; 1,4-dihydroxy-2-naphthoate biosynthesis; 1,4-dihydroxy-2-naphthoate from chorismate: step 3/7. It participates in quinol/quinone metabolism; menaquinone biosynthesis. Functionally, catalyzes a proton abstraction reaction that results in 2,5-elimination of pyruvate from 2-succinyl-5-enolpyruvyl-6-hydroxy-3-cyclohexene-1-carboxylate (SEPHCHC) and the formation of 2-succinyl-6-hydroxy-2,4-cyclohexadiene-1-carboxylate (SHCHC). The sequence is that of 2-succinyl-6-hydroxy-2,4-cyclohexadiene-1-carboxylate synthase from Yersinia pestis (strain Pestoides F).